Consider the following 353-residue polypeptide: Photosystem II D2 protein (353 aa).

Thr2 is subject to N-acetylthreonine. Thr2 carries the phosphothreonine modification. The helical transmembrane segment at 41–61 (CAYFAVGGWFTGTTFVTSWYT) threads the bilayer. Residue His118 participates in chlorophyll a binding. A helical transmembrane segment spans residues 125–141 (GFMLRQFELARSVQLRP). Pheophytin a contacts are provided by Gln130 and Asn143. Residues 153–166 (VFVSVFLIYPLGQS) traverse the membrane as a helical segment. Position 198 (His198) interacts with chlorophyll a. The chain crosses the membrane as a helical span at residues 208-228 (AALLCAIHGATVENTLFEDGD). A plastoquinone is bound by residues His215 and Phe262. Residue His215 participates in Fe cation binding. His269 serves as a coordination point for Fe cation. Residues 279-295 (GLWMSALGVVGLALNLR) traverse the membrane as a helical segment.

It belongs to the reaction center PufL/M/PsbA/D family. In terms of assembly, PSII is composed of 1 copy each of membrane proteins PsbA, PsbB, PsbC, PsbD, PsbE, PsbF, PsbH, PsbI, PsbJ, PsbK, PsbL, PsbM, PsbT, PsbX, PsbY, PsbZ, Psb30/Ycf12, at least 3 peripheral proteins of the oxygen-evolving complex and a large number of cofactors. It forms dimeric complexes. The D1/D2 heterodimer binds P680, chlorophylls that are the primary electron donor of PSII, and subsequent electron acceptors. It shares a non-heme iron and each subunit binds pheophytin, quinone, additional chlorophylls, carotenoids and lipids. There is also a Cl(-1) ion associated with D1 and D2, which is required for oxygen evolution. The PSII complex binds additional chlorophylls, carotenoids and specific lipids. is required as a cofactor.

It is found in the plastid. The protein resides in the chloroplast thylakoid membrane. It catalyses the reaction 2 a plastoquinone + 4 hnu + 2 H2O = 2 a plastoquinol + O2. Its function is as follows. Photosystem II (PSII) is a light-driven water:plastoquinone oxidoreductase that uses light energy to abstract electrons from H(2)O, generating O(2) and a proton gradient subsequently used for ATP formation. It consists of a core antenna complex that captures photons, and an electron transfer chain that converts photonic excitation into a charge separation. The D1/D2 (PsbA/PsbD) reaction center heterodimer binds P680, the primary electron donor of PSII as well as several subsequent electron acceptors. D2 is needed for assembly of a stable PSII complex. This is Photosystem II D2 protein from Jasminum nudiflorum (Winter jasmine).